Reading from the N-terminus, the 663-residue chain is MKTHSVFGFFFKVLLIQVYLFNKTLAAPSPIIKFPGDSTPKTDKELAVQYLNKYYGCPKDNCNLFVLKDTLKKMQKFFGLPETGDLDQNTIETMKKPRCGNPDVANYNFFPRKPKWEKNHITYRIIGYTPDLDPETVDDAFARAFKVWSDVTPLRFNRINDGEADIMINFGRWEHGDGYPFDGKDGLLAHAFAPGPGIGGDSHFDDDELWTLGEGQVVRVKYGNADGEYCKFPFWFNGKEYNSCTDAGRNDGFLWCSTTKDFDADGKYGFCPHESLFTMGGNGDGQPCKFPFKFQGQSYDQCTTEGRTDGYRWCGTTEDYDRDKKYGFCPETAMSTVGGNSEGAPCVFPFIFLGNKYDSCTSAGRNDGKLWCASTSSYDDDRKWGFCPDQGYSLFLVAAHEFGHAMGLEHSEDPGALMAPIYTYTKNFRLSQDDIKGIQELYEVSPDVEPGPGPGPGPGPRPTLGPVTPELCKHDIVFDGVAQIRGEIFFFKDRFMWRTVNPRGKPTGPLLVATFWPDLPEKIDAVYESPQDEKAVFFAGNEYWVYTASNLDRGYPKKLTSLGLPPDVQRIDAAFNWGRNKKTYIFSGDRYWKYNEEKKKMELATPKFIADSWNGVPDNLDAVLGLTDSGYTYFFKDQYYLQMEDKSLKIVKIGKISSDWLGC.

A signal peptide spans 1 to 26 (MKTHSVFGFFFKVLLIQVYLFNKTLA). The propeptide at 27–106 (APSPIIKFPG…PRCGNPDVAN (80 aa)) is activation peptide. The Cysteine switch signature appears at 97–104 (PRCGNPDV). Cys-99 serves as a coordination point for Zn(2+). Positions 107–218 (YNFFPRKPKW…LWTLGEGQVV (112 aa)) are collagenase-like 1. 2 residues coordinate Ca(2+): Asp-131 and Asp-165. Residues His-175 and Asp-177 each contribute to the Zn(2+) site. The Ca(2+) site is built by Asp-182 and Gly-183. His-190 is a Zn(2+) binding site. Ca(2+) contacts are provided by Gly-197, Gly-199, and Asp-201. His-203 serves as a coordination point for Zn(2+). The Ca(2+) site is built by Asp-205, Asp-206, and Glu-208. The segment at 219-393 (RVKYGNADGE…WGFCPDQGYS (175 aa)) is collagen-binding. 3 Fibronectin type-II domains span residues 225–273 (ADGE…FCPH), 283–331 (GDGQ…FCPE), and 341–389 (SEGA…FCPD). 6 disulfides stabilise this stretch: Cys-230-Cys-256, Cys-244-Cys-271, Cys-288-Cys-314, Cys-302-Cys-329, Cys-346-Cys-372, and Cys-360-Cys-387. The interval 394–468 (LFLVAAHEFG…GPRPTLGPVT (75 aa)) is collagenase-like 2. His-400 serves as a coordination point for Zn(2+). Glu-401 is a catalytic residue. The Zn(2+) site is built by His-404 and His-410. The interval 445 to 464 (SPDVEPGPGPGPGPGPRPTL) is disordered. The span at 449–463 (EPGPGPGPGPGPRPT) shows a compositional bias: pro residues. Cys-472 and Cys-663 are disulfide-bonded. Hemopexin repeat units follow at residues 475–519 (DIVF…WPDL), 520–566 (PEKI…GLPP), 568–616 (VQRI…WNGV), and 617–663 (PDNL…WLGC). Ca(2+) is bound by residues Asp-479, Asp-524, Asp-572, and Asp-621.

Belongs to the peptidase M10A family. In terms of assembly, ligand for integrin alpha-V/beta-3. Ca(2+) is required as a cofactor. The cofactor is Zn(2+). Post-translationally, the propeptide is processed by MMP14 (MT-MMP1) and MMP16 (MT-MMP3). As to expression, produced by normal skin fibroblasts.

It localises to the secreted. Its subcellular location is the extracellular space. The protein resides in the extracellular matrix. The enzyme catalyses Cleavage of gelatin type I and collagen types IV, V, VII, X. Cleaves the collagen-like sequence Pro-Gln-Gly-|-Ile-Ala-Gly-Gln.. The sequence is that of 72 kDa type IV collagenase (MMP2) from Gallus gallus (Chicken).